Here is a 302-residue protein sequence, read N- to C-terminus: 4-hydroxy-tetrahydrodipicolinate synthase (302 aa).

Thr-55 contributes to the pyruvate binding site. Catalysis depends on Tyr-144, which acts as the Proton donor/acceptor. Lys-172 functions as the Schiff-base intermediate with substrate in the catalytic mechanism. Val-214 contacts pyruvate.

Belongs to the DapA family. As to quaternary structure, homotetramer; dimer of dimers.

It localises to the cytoplasm. The catalysed reaction is L-aspartate 4-semialdehyde + pyruvate = (2S,4S)-4-hydroxy-2,3,4,5-tetrahydrodipicolinate + H2O + H(+). It participates in amino-acid biosynthesis; L-lysine biosynthesis via DAP pathway; (S)-tetrahydrodipicolinate from L-aspartate: step 3/4. Catalyzes the condensation of (S)-aspartate-beta-semialdehyde [(S)-ASA] and pyruvate to 4-hydroxy-tetrahydrodipicolinate (HTPA). The sequence is that of 4-hydroxy-tetrahydrodipicolinate synthase from Synechococcus sp. (strain CC9902).